Here is a 137-residue protein sequence, read N- to C-terminus: Ribonuclease VapC3 (137 aa).

Positions 12 to 129 constitute a PINc domain; the sequence is VVVDASAMVD…LTTDERLARA (118 aa). Mg(2+)-binding residues include aspartate 15 and aspartate 105.

The protein belongs to the PINc/VapC protein family. It depends on Mg(2+) as a cofactor.

In terms of biological role, toxic component of a type II toxin-antitoxin (TA) system. An RNase. Its toxic effect is neutralized by coexpression with cognate antitoxin VapB3. This chain is Ribonuclease VapC3, found in Mycobacterium tuberculosis (strain CDC 1551 / Oshkosh).